The following is a 320-amino-acid chain: tRNA uridine(34) hydroxylase (320 aa).

The Rhodanese domain occupies 123–217 (EDENTVILDA…YGKDPETKGL (95 aa)). The active-site Cysteine persulfide intermediate is the cysteine 177.

The protein belongs to the TrhO family.

The catalysed reaction is uridine(34) in tRNA + AH2 + O2 = 5-hydroxyuridine(34) in tRNA + A + H2O. Functionally, catalyzes oxygen-dependent 5-hydroxyuridine (ho5U) modification at position 34 in tRNAs. In Staphylococcus epidermidis (strain ATCC 35984 / DSM 28319 / BCRC 17069 / CCUG 31568 / BM 3577 / RP62A), this protein is tRNA uridine(34) hydroxylase.